The primary structure comprises 387 residues: Phosphoglycerate kinase (387 aa).

Residues 21–23, Arg-36, 59–62, Arg-113, and Arg-146 each bind substrate; these read DLN and HLGR. Residues Lys-197, Glu-314, and 340 to 343 contribute to the ATP site; that span reads GGDT.

Belongs to the phosphoglycerate kinase family. In terms of assembly, monomer.

It localises to the cytoplasm. The catalysed reaction is (2R)-3-phosphoglycerate + ATP = (2R)-3-phospho-glyceroyl phosphate + ADP. It functions in the pathway carbohydrate degradation; glycolysis; pyruvate from D-glyceraldehyde 3-phosphate: step 2/5. The protein is Phosphoglycerate kinase of Aeromonas salmonicida (strain A449).